A 449-amino-acid chain; its full sequence is Delta(8)-fatty-acid desaturase 1 (449 aa).

Residues 7-91 form the Cytochrome b5 heme-binding domain; sequence KKYITNEDLK…IRDFQVSEVS (85 aa). Residues H42 and H65 each contribute to the heme site. The next 2 helical transmembrane spans lie at 113-133 and 138-158; these read VTLYTLAFVAAMFLGVLYGVL and VFAHQIAAALLGLLWIQSAYI. The short motif at 160–164 is the Histidine box-1 element; it reads HDSGH. Residues 173-195 form a helical membrane-spanning segment; it reads YNRFAQLLSGNCLTGISIAWWKW. The short motif at 197–201 is the Histidine box-2 element; that stretch reads HNAHH. 3 helical membrane-spanning segments follow: residues 255-275, 284-304, and 311-331; these read YYPVMCFGRINLFIQTFLLLF, ALNFAGILVFWTWFPLLVSCL, and FFFVFTSFTVTALQHIQFTLN. A Histidine box-3 motif is present at residues 374 to 378; sequence QLEHH.

The protein belongs to the fatty acid desaturase type 1 family. It depends on Fe cation as a cofactor. Highly expressed in flowers. Expressed in roots, leaves, stems and siliques.

The protein localises to the endoplasmic reticulum membrane. It carries out the reaction an N-acyl-(4R)-4-hydroxysphinganine + 2 Fe(II)-[cytochrome b5] + O2 + 2 H(+) = a (4R,8E)-4-hydroxysphingenine ceramide + 2 Fe(III)-[cytochrome b5] + 2 H2O. It catalyses the reaction an N-acyl-(4R)-4-hydroxysphinganine + 2 Fe(II)-[cytochrome b5] + O2 + 2 H(+) = a (4R,8Z)-4-hydroxysphing-8-enine ceramide + 2 Fe(III)-[cytochrome b5] + 2 H2O. Plays a major role as delta(8)-fatty-acid desaturase which introduces a double bond at the 8-position in the long-chain base (LCB) of ceramides with or without a hydroxy group at the 4-position. The enzyme produces both the 8E and 8Z isomers (in a 4:1 ratio). This structural modification contributes to the quantitative partitioning of ceramides between the two major sphingolipid classes, glucosylceramides and glycosylinositolphosphoryl ceramides. Sphingolipids are important membrane components involved in environmental stress responses, such as resistance to chilling, and act as cell signaling molecules. The sequence is that of Delta(8)-fatty-acid desaturase 1 (SLD1) from Arabidopsis thaliana (Mouse-ear cress).